We begin with the raw amino-acid sequence, 154 residues long: uncharacterized protein (154 aa).

The interval 104-124 (NNNNNDNDNNNKEKEDNDEKE) is disordered. Basic and acidic residues predominate over residues 112 to 124 (NNNKEKEDNDEKE).

This is an uncharacterized protein from Dictyostelium discoideum (Social amoeba).